A 442-amino-acid polypeptide reads, in one-letter code: Asparagine--tRNA ligase (442 aa).

It belongs to the class-II aminoacyl-tRNA synthetase family. Homodimer.

It localises to the cytoplasm. It carries out the reaction tRNA(Asn) + L-asparagine + ATP = L-asparaginyl-tRNA(Asn) + AMP + diphosphate + H(+). This Koribacter versatilis (strain Ellin345) protein is Asparagine--tRNA ligase.